The chain runs to 155 residues: Small ribosomal subunit protein uS7cz/uS7cy (155 aa).

The protein belongs to the universal ribosomal protein uS7 family. As to quaternary structure, part of the 30S ribosomal subunit.

The protein resides in the plastid. Its subcellular location is the chloroplast. One of the primary rRNA binding proteins, it binds directly to 16S rRNA where it nucleates assembly of the head domain of the 30S subunit. The chain is Small ribosomal subunit protein uS7cz/uS7cy (rps7-A) from Calycanthus floridus var. glaucus (Eastern sweetshrub).